Reading from the N-terminus, the 469-residue chain is Adenosylhomocysteinase (469 aa).

Substrate-binding residues include Thr63, Asp139, and Glu164. Residue 165–167 (TTT) coordinates NAD(+). Substrate contacts are provided by Lys194 and Asp198. NAD(+) contacts are provided by residues Asn199, 228-233 (GYGDVG), Glu251, Asn300, 321-323 (IGH), and Asn375.

It belongs to the adenosylhomocysteinase family. The cofactor is NAD(+).

It is found in the cytoplasm. The enzyme catalyses S-adenosyl-L-homocysteine + H2O = L-homocysteine + adenosine. The protein operates within amino-acid biosynthesis; L-homocysteine biosynthesis; L-homocysteine from S-adenosyl-L-homocysteine: step 1/1. Functionally, may play a key role in the regulation of the intracellular concentration of adenosylhomocysteine. The polypeptide is Adenosylhomocysteinase (Pseudomonas putida (strain ATCC 700007 / DSM 6899 / JCM 31910 / BCRC 17059 / LMG 24140 / F1)).